The primary structure comprises 275 residues: tRNA pseudouridine synthase A (275 aa).

The active-site Nucleophile is the Asp-72. Tyr-133 lines the substrate pocket.

This sequence belongs to the tRNA pseudouridine synthase TruA family. As to quaternary structure, homodimer.

It catalyses the reaction uridine(38/39/40) in tRNA = pseudouridine(38/39/40) in tRNA. Its function is as follows. Formation of pseudouridine at positions 38, 39 and 40 in the anticodon stem and loop of transfer RNAs. In Gluconobacter oxydans (strain 621H) (Gluconobacter suboxydans), this protein is tRNA pseudouridine synthase A.